Here is a 249-residue protein sequence, read N- to C-terminus: MARYDRAITVFSPDGHLFQVEYALEAVRKGNAAVGVRGSDTVVLGVEKKSTPKLQDSRSVRKIASLDTHIALACAGLKADARVLINRARVECQSHRLTVEDAVTVEYITRYIAGLQQKYTQSGGVRPFGLSTLIVGFDPYTDKPALYQTDPSGTFSAWKANATGRNSNSMREFLEKNYKETSGKETIKLAIRALLEVVESGGKNIEIAVMTQKDGLRQLEEAEIDEYVAEIEAEKAAAEAAKKGAPKET.

It belongs to the peptidase T1A family. In terms of assembly, the 26S proteasome consists of a 20S proteasome core and two 19S regulatory subunits. The 20S proteasome core is composed of 28 subunits that are arranged in four stacked rings, resulting in a barrel-shaped structure. The two end rings are each formed by seven alpha subunits, and the two central rings are each formed by seven beta subunits. The catalytic chamber with the active sites is on the inside of the barrel.

It is found in the cytoplasm. The protein localises to the nucleus. The proteasome is a multicatalytic proteinase complex which is characterized by its ability to cleave peptides with Arg, Phe, Tyr, Leu, and Glu adjacent to the leaving group at neutral or slightly basic pH. The proteasome has an ATP-dependent proteolytic activity. The protein is Proteasome subunit alpha type-7-B (PAD1) of Oryza sativa subsp. indica (Rice).